The sequence spans 357 residues: uncharacterized protein (357 aa).

Residues Cys-6 to Cys-32 constitute a DNA-binding region (zn(2)-C6 fungal-type).

It is found in the nucleus. This is an uncharacterized protein from Schizosaccharomyces pombe (strain 972 / ATCC 24843) (Fission yeast).